Consider the following 209-residue polypeptide: Large ribosomal subunit protein uL3 (209 aa).

Residues 141–163 (RAVGSMGASSDPSRTFKNKRMPG) form a disordered region.

It belongs to the universal ribosomal protein uL3 family. In terms of assembly, part of the 50S ribosomal subunit. Forms a cluster with proteins L14 and L19.

Its function is as follows. One of the primary rRNA binding proteins, it binds directly near the 3'-end of the 23S rRNA, where it nucleates assembly of the 50S subunit. This Clostridium botulinum (strain Langeland / NCTC 10281 / Type F) protein is Large ribosomal subunit protein uL3.